We begin with the raw amino-acid sequence, 375 residues long: Probable 1-acyl-sn-glycerol-3-phosphate acyltransferase 5 (375 aa).

2 consecutive transmembrane segments (helical) span residues 21-41 and 57-77; these read IICL…WGFL and CVSF…EKIN. The HXXXXD motif signature appears at 100–105; that stretch reads HRTEVD. A run of 2 helical transmembrane segments spans residues 312–332 and 337–357; these read YLIN…LTFF and WFRI…HFNL.

This sequence belongs to the 1-acyl-sn-glycerol-3-phosphate acyltransferase family. In terms of tissue distribution, widely expressed at low level.

It is found in the membrane. The enzyme catalyses a 1-acyl-sn-glycero-3-phosphate + an acyl-CoA = a 1,2-diacyl-sn-glycero-3-phosphate + CoA. It participates in phospholipid metabolism; CDP-diacylglycerol biosynthesis; CDP-diacylglycerol from sn-glycerol 3-phosphate: step 2/3. In terms of biological role, may convert lysophosphatidic acid (LPA) into phosphatidic acid by incorporating acyl moiety at the 2 position. Has no activity when expressed in bacteria or yeast. This Arabidopsis thaliana (Mouse-ear cress) protein is Probable 1-acyl-sn-glycerol-3-phosphate acyltransferase 5 (LPAT5).